The chain runs to 144 residues: Probable copper-binding protein PcoE (144 aa).

The first 20 residues, 1–20 (MKKILVSFVAIMAVASSAMA), serve as a signal peptide directing secretion. Residues 86–144 (MHKKMMKSKPAASNETAKSFSEMNEHEKSAVVHEKANNGQSSVIHQQQAEKHRSQITQN) are disordered. Residues 96–107 (AASNETAKSFSE) are compositionally biased toward polar residues. The span at 108–121 (MNEHEKSAVVHEKA) shows a compositional bias: basic and acidic residues. Positions 122–132 (NNGQSSVIHQQ) are enriched in polar residues.

The protein to S.typhimurium SilE.

It localises to the periplasm. Functionally, required for the copper-inducible expression of copper resistance. Activated by the two-component regulatory system CusS/CusR. In Escherichia coli, this protein is Probable copper-binding protein PcoE (pcoE).